A 477-amino-acid chain; its full sequence is Lactate utilization protein B (477 aa).

2 4Fe-4S ferredoxin-type domains span residues 304-334 and 353-382; these read GTEFQSVLQCIRCAACINVCPVYRHVGGHSY and YDDYKELPYASSLCAACSEACPVKIPLHEL. Residues cysteine 313, cysteine 316, cysteine 319, cysteine 323, cysteine 366, cysteine 369, and cysteine 373 each contribute to the [4Fe-4S] cluster site. A disordered region spans residues 433–477; sequence KEDGKITKGPGPLKQWTQIRDFPAPNKSRFRDWFEDRRKEKGEDK. Residues 461–477 show a composition bias toward basic and acidic residues; it reads RFRDWFEDRRKEKGEDK.

Belongs to the LutB/YkgF family.

Functionally, is involved in L-lactate degradation and allows cells to grow with lactate as the sole carbon source. Has probably a role as an electron transporter during oxidation of L-lactate. The polypeptide is Lactate utilization protein B (Bacillus licheniformis (strain ATCC 14580 / DSM 13 / JCM 2505 / CCUG 7422 / NBRC 12200 / NCIMB 9375 / NCTC 10341 / NRRL NRS-1264 / Gibson 46)).